Consider the following 256-residue polypeptide: Small ribosomal subunit protein eS1 (256 aa).

Positions 1-18 are enriched in basic residues; sequence MAVGKNKRLSKGKKGIKK. Positions 1–20 are disordered; sequence MAVGKNKRLSKGKKGIKKRT. Ala-2 carries the N-acetylalanine; partial modification.

The protein belongs to the eukaryotic ribosomal protein eS1 family. In terms of assembly, component of the small ribosomal subunit. Mature ribosomes consist of a small (40S) and a large (60S) subunit. The 40S subunit contains about 33 different proteins and 1 molecule of RNA (18S). The 60S subunit contains about 49 different proteins and 3 molecules of RNA (25S, 5.8S and 5S).

The protein localises to the cytoplasm. The protein is Small ribosomal subunit protein eS1 (rps1) of Aspergillus flavus (strain ATCC 200026 / FGSC A1120 / IAM 13836 / NRRL 3357 / JCM 12722 / SRRC 167).